The primary structure comprises 558 residues: DNA ligase B (558 aa).

K124 acts as the N6-AMP-lysine intermediate in catalysis.

It belongs to the NAD-dependent DNA ligase family. LigB subfamily.

The catalysed reaction is NAD(+) + (deoxyribonucleotide)n-3'-hydroxyl + 5'-phospho-(deoxyribonucleotide)m = (deoxyribonucleotide)n+m + AMP + beta-nicotinamide D-nucleotide.. Catalyzes the formation of phosphodiester linkages between 5'-phosphoryl and 3'-hydroxyl groups in double-stranded DNA using NAD as a coenzyme and as the energy source for the reaction. This Klebsiella pneumoniae (strain 342) protein is DNA ligase B.